A 596-amino-acid polypeptide reads, in one-letter code: Probable protein phosphatase 2C 26 (596 aa).

Positions 122–154 (SGPLDPAVPFSGPLPAKPPKPASSSSRGFSRRF) are disordered. Positions 177 to 584 (LRRDDGVQWA…DDVTVMVISL (408 aa)) constitute a PPM-type phosphatase domain. Mn(2+)-binding residues include D212, G213, D512, and D575.

Belongs to the PP2C family. The cofactor is Mg(2+). Mn(2+) serves as cofactor.

It catalyses the reaction O-phospho-L-seryl-[protein] + H2O = L-seryl-[protein] + phosphate. The catalysed reaction is O-phospho-L-threonyl-[protein] + H2O = L-threonyl-[protein] + phosphate. In Oryza sativa subsp. japonica (Rice), this protein is Probable protein phosphatase 2C 26.